Reading from the N-terminus, the 128-residue chain is Ribosome-binding factor A (128 aa).

The protein belongs to the RbfA family. Monomer. Binds 30S ribosomal subunits, but not 50S ribosomal subunits or 70S ribosomes.

The protein resides in the cytoplasm. Its function is as follows. One of several proteins that assist in the late maturation steps of the functional core of the 30S ribosomal subunit. Associates with free 30S ribosomal subunits (but not with 30S subunits that are part of 70S ribosomes or polysomes). Required for efficient processing of 16S rRNA. May interact with the 5'-terminal helix region of 16S rRNA. In Idiomarina loihiensis (strain ATCC BAA-735 / DSM 15497 / L2-TR), this protein is Ribosome-binding factor A.